A 227-amino-acid polypeptide reads, in one-letter code: Cytochrome c oxidase subunit 2 (227 aa).

Residues 1 to 14 lie on the Mitochondrial intermembrane side of the membrane; sequence MAYPFQLGLQDATS. Residues 15–45 form a helical membrane-spanning segment; the sequence is PIMEELLHFHDHTLMIVFLISSLILYIISLM. Over 46–59 the chain is Mitochondrial matrix; sequence LTTKLTHTSTMDAQ. The chain crosses the membrane as a helical span at residues 60 to 87; it reads EVETVWTILPAIILILIALPSLRILYMM. Residues 88 to 227 are Mitochondrial intermembrane-facing; the sequence is DEINNPSLTV…YFETWSALMV (140 aa). 6 residues coordinate Cu cation: histidine 161, cysteine 196, glutamate 198, cysteine 200, histidine 204, and methionine 207. Residue glutamate 198 coordinates Mg(2+). Tyrosine 218 bears the Phosphotyrosine mark.

Belongs to the cytochrome c oxidase subunit 2 family. As to quaternary structure, component of the cytochrome c oxidase (complex IV, CIV), a multisubunit enzyme composed of 14 subunits. The complex is composed of a catalytic core of 3 subunits MT-CO1, MT-CO2 and MT-CO3, encoded in the mitochondrial DNA, and 11 supernumerary subunits COX4I, COX5A, COX5B, COX6A, COX6B, COX6C, COX7A, COX7B, COX7C, COX8 and NDUFA4, which are encoded in the nuclear genome. The complex exists as a monomer or a dimer and forms supercomplexes (SCs) in the inner mitochondrial membrane with NADH-ubiquinone oxidoreductase (complex I, CI) and ubiquinol-cytochrome c oxidoreductase (cytochrome b-c1 complex, complex III, CIII), resulting in different assemblies (supercomplex SCI(1)III(2)IV(1) and megacomplex MCI(2)III(2)IV(2)). Found in a complex with TMEM177, COA6, COX18, COX20, SCO1 and SCO2. Interacts with TMEM177 in a COX20-dependent manner. Interacts with COX20. Interacts with COX16. Requires Cu cation as cofactor.

It localises to the mitochondrion inner membrane. The enzyme catalyses 4 Fe(II)-[cytochrome c] + O2 + 8 H(+)(in) = 4 Fe(III)-[cytochrome c] + 2 H2O + 4 H(+)(out). In terms of biological role, component of the cytochrome c oxidase, the last enzyme in the mitochondrial electron transport chain which drives oxidative phosphorylation. The respiratory chain contains 3 multisubunit complexes succinate dehydrogenase (complex II, CII), ubiquinol-cytochrome c oxidoreductase (cytochrome b-c1 complex, complex III, CIII) and cytochrome c oxidase (complex IV, CIV), that cooperate to transfer electrons derived from NADH and succinate to molecular oxygen, creating an electrochemical gradient over the inner membrane that drives transmembrane transport and the ATP synthase. Cytochrome c oxidase is the component of the respiratory chain that catalyzes the reduction of oxygen to water. Electrons originating from reduced cytochrome c in the intermembrane space (IMS) are transferred via the dinuclear copper A center (CU(A)) of subunit 2 and heme A of subunit 1 to the active site in subunit 1, a binuclear center (BNC) formed by heme A3 and copper B (CU(B)). The BNC reduces molecular oxygen to 2 water molecules using 4 electrons from cytochrome c in the IMS and 4 protons from the mitochondrial matrix. In Canis simensis (Ethiopian wolf), this protein is Cytochrome c oxidase subunit 2 (MT-CO2).